The sequence spans 179 residues: Large ribosomal subunit protein uL5 (179 aa).

The protein belongs to the universal ribosomal protein uL5 family. As to quaternary structure, part of the 50S ribosomal subunit; part of the 5S rRNA/L5/L18/L25 subcomplex. Contacts the 5S rRNA and the P site tRNA. Forms a bridge to the 30S subunit in the 70S ribosome.

Its function is as follows. This is one of the proteins that bind and probably mediate the attachment of the 5S RNA into the large ribosomal subunit, where it forms part of the central protuberance. In the 70S ribosome it contacts protein S13 of the 30S subunit (bridge B1b), connecting the 2 subunits; this bridge is implicated in subunit movement. Contacts the P site tRNA; the 5S rRNA and some of its associated proteins might help stabilize positioning of ribosome-bound tRNAs. The chain is Large ribosomal subunit protein uL5 from Bacillus licheniformis (strain ATCC 14580 / DSM 13 / JCM 2505 / CCUG 7422 / NBRC 12200 / NCIMB 9375 / NCTC 10341 / NRRL NRS-1264 / Gibson 46).